Here is a 487-residue protein sequence, read N- to C-terminus: Protein nucleotidyltransferase YdiU (487 aa).

The ATP site is built by Gly90, Gly92, Arg93, Lys113, Asp125, Gly126, Arg176, and Arg183. Asp252 functions as the Proton acceptor in the catalytic mechanism. Mg(2+) contacts are provided by Asn253 and Asp262. Asp262 lines the ATP pocket.

This sequence belongs to the SELO family. Requires Mg(2+) as cofactor. Mn(2+) serves as cofactor.

It catalyses the reaction L-seryl-[protein] + ATP = 3-O-(5'-adenylyl)-L-seryl-[protein] + diphosphate. It carries out the reaction L-threonyl-[protein] + ATP = 3-O-(5'-adenylyl)-L-threonyl-[protein] + diphosphate. The catalysed reaction is L-tyrosyl-[protein] + ATP = O-(5'-adenylyl)-L-tyrosyl-[protein] + diphosphate. The enzyme catalyses L-histidyl-[protein] + UTP = N(tele)-(5'-uridylyl)-L-histidyl-[protein] + diphosphate. It catalyses the reaction L-seryl-[protein] + UTP = O-(5'-uridylyl)-L-seryl-[protein] + diphosphate. It carries out the reaction L-tyrosyl-[protein] + UTP = O-(5'-uridylyl)-L-tyrosyl-[protein] + diphosphate. In terms of biological role, nucleotidyltransferase involved in the post-translational modification of proteins. It can catalyze the addition of adenosine monophosphate (AMP) or uridine monophosphate (UMP) to a protein, resulting in modifications known as AMPylation and UMPylation. This Azotobacter vinelandii (strain DJ / ATCC BAA-1303) protein is Protein nucleotidyltransferase YdiU.